Here is a 667-residue protein sequence, read N- to C-terminus: Transmembrane 9 superfamily member 1 (667 aa).

The first 22 residues, 1–22 (MIYKMAHVQLLLLYFFVSTVKA), serve as a signal peptide directing secretion. At 23-302 (FYLPGVAPTT…DKYLHVYDPS (280 aa)) the chain is on the lumenal side. 2 N-linked (GlcNAc...) asparagine glycosylation sites follow: Asn61 and Asn282. The chain crosses the membrane as a helical span at residues 303–323 (IQWFSLINFSLVVVLLSSVVI). Over 324-370 (HSLLRALKSDFARYNELNLDDDFQEDSGWKLNHGDVFRSPSQSLTLS) the chain is Cytoplasmic. A helical membrane pass occupies residues 371–391 (ILVGSGVQLFLMVTCSIFFAA). The Lumenal segment spans residues 392 to 405 (LGFLSPSSRGSLAT). Residues 406–426 (VMFILYALFGFVGSYTSMGIY) form a helical membrane-spanning segment. At 427 to 442 (KFFNGPYWKANLILTP) the chain is on the cytoplasmic side. Residues 443–463 (LLVPGAILLIIIALNFFLMFV) traverse the membrane as a helical segment. The Lumenal segment spans residues 464–474 (HSSGVIPASTL). The chain crosses the membrane as a helical span at residues 475 to 495 (FFMVFLWFLFSIPLSFAGSLI). Over 496–527 (ARKRCHWDEHPTKTNQIARQIPFQPWYLKTIP) the chain is Cytoplasmic. Residues 528–548 (ATLIAGIFPFGSIAVELYFIY) form a helical membrane-spanning segment. Topologically, residues 549–560 (TSLWFNKIFYMF) are lumenal. The helical transmembrane segment at 561 to 581 (GFLFFSFLLLTLTSSLVTILI) threads the bilayer. Over 582 to 596 (TYHSLCLENWKWQWR) the chain is Cytoplasmic. A helical membrane pass occupies residues 597–617 (GFIIGGAGCALYVFIHSILFT). Topologically, residues 618–635 (KFKLGGFTTIVLYVGYSS) are lumenal. Residues 636-656 (VISLLCCLVTGSIGFISSMLF) form a helical membrane-spanning segment. Residues 657–667 (VRKIYSSIKVD) are Cytoplasmic-facing.

It belongs to the nonaspanin (TM9SF) (TC 9.A.2) family.

Its subcellular location is the endosome membrane. It is found in the vacuole membrane. In terms of biological role, with TMN2 and TMN3, plays a critical role in the late stages of a nutrient-controlled pathway notably regulating FLO11 gene expression. Acts downstream of RAS2 and TOR. Essential for cell adhesion and filamentous growth. May play a role as effector of cellular copper homeostasis. The sequence is that of Transmembrane 9 superfamily member 1 (EMP70) from Saccharomyces cerevisiae (strain ATCC 204508 / S288c) (Baker's yeast).